The chain runs to 698 residues: Dolichyl-diphosphooligosaccharide--protein glycosyltransferase subunit 2 (698 aa).

A signal peptide spans Met1 to Ala29. At Val30–Glu600 the chain is on the lumenal side. The helical transmembrane segment at Leu601–Met621 threads the bilayer. Residues Arg622–Ala638 are Cytoplasmic-facing. A helical transmembrane segment spans residues Phe639–Ile659. Position 660 (Lys660) is a topological domain, lumenal. A helical transmembrane segment spans residues Leu661 to Gly681. Residues His682–Ala698 lie on the Cytoplasmic side of the membrane.

The protein belongs to the SWP1 family. In terms of assembly, component of the oligosaccharyltransferase (OST) complex.

It is found in the endoplasmic reticulum membrane. It functions in the pathway protein modification; protein glycosylation. In terms of biological role, subunit of the oligosaccharyl transferase (OST) complex that catalyzes the initial transfer of a defined glycan (Glc(3)Man(9)GlcNAc(2) in eukaryotes) from the lipid carrier dolichol-pyrophosphate to an asparagine residue within an Asn-X-Ser/Thr consensus motif in nascent polypeptide chains, the first step in protein N-glycosylation. N-glycosylation occurs cotranslationally and the complex associates with the Sec61 complex at the channel-forming translocon complex that mediates protein translocation across the endoplasmic reticulum (ER). All subunits are required for a maximal enzyme activity. In Oryza sativa subsp. japonica (Rice), this protein is Dolichyl-diphosphooligosaccharide--protein glycosyltransferase subunit 2 (RPN2).